A 508-amino-acid polypeptide reads, in one-letter code: DNA polymerase II small subunit (508 aa).

Low complexity predominate over residues 66–80 (ASSAAQTSAPASTPP). The disordered stretch occupies residues 66–122 (ASSAAQTSAPASTPPDEATTHTDPSATDTPPNHDGGRAATADARSVEIDGDMTGAST). The span at 86-95 (HTDPSATDTP) shows a compositional bias: polar residues.

The protein belongs to the DNA polymerase delta/II small subunit family. As to quaternary structure, heterodimer of a large subunit and a small subunit.

The catalysed reaction is DNA(n) + a 2'-deoxyribonucleoside 5'-triphosphate = DNA(n+1) + diphosphate. It carries out the reaction Exonucleolytic cleavage in the 3'- to 5'-direction to yield nucleoside 5'-phosphates.. Its function is as follows. Possesses two activities: a DNA synthesis (polymerase) and an exonucleolytic activity that degrades single-stranded DNA in the 3' to 5' direction. Has a template-primer preference which is characteristic of a replicative DNA polymerase. The chain is DNA polymerase II small subunit from Halobacterium salinarum (strain ATCC 29341 / DSM 671 / R1).